Reading from the N-terminus, the 96-residue chain is Co-chaperonin GroES (96 aa).

This sequence belongs to the GroES chaperonin family. Heptamer of 7 subunits arranged in a ring. Interacts with the chaperonin GroEL.

The protein localises to the cytoplasm. Functionally, together with the chaperonin GroEL, plays an essential role in assisting protein folding. The GroEL-GroES system forms a nano-cage that allows encapsulation of the non-native substrate proteins and provides a physical environment optimized to promote and accelerate protein folding. GroES binds to the apical surface of the GroEL ring, thereby capping the opening of the GroEL channel. The polypeptide is Co-chaperonin GroES (Hyphomonas neptunium (strain ATCC 15444)).